Here is a 397-residue protein sequence, read N- to C-terminus: Enoyl-[acyl-carrier-protein] reductase [NADH] (397 aa).

Residues glycine 48 to tyrosine 53, phenylalanine 74 to glutamate 75, aspartate 111 to alanine 112, and valine 139 to alanine 140 each bind NAD(+). A substrate-binding site is contributed by tyrosine 225. The Proton donor role is filled by tyrosine 235. NAD(+) contacts are provided by residues lysine 244 and valine 273–threonine 275.

This sequence belongs to the TER reductase family. In terms of assembly, monomer.

The enzyme catalyses a 2,3-saturated acyl-[ACP] + NAD(+) = a (2E)-enoyl-[ACP] + NADH + H(+). Its pathway is lipid metabolism; fatty acid biosynthesis. In terms of biological role, involved in the final reduction of the elongation cycle of fatty acid synthesis (FAS II). Catalyzes the reduction of a carbon-carbon double bond in an enoyl moiety that is covalently linked to an acyl carrier protein (ACP). In Burkholderia mallei (strain SAVP1), this protein is Enoyl-[acyl-carrier-protein] reductase [NADH].